Here is a 462-residue protein sequence, read N- to C-terminus: L-seryl-tRNA(Sec) selenium transferase (462 aa).

Lys-292 is subject to N6-(pyridoxal phosphate)lysine.

Belongs to the SelA family. It depends on pyridoxal 5'-phosphate as a cofactor.

The protein resides in the cytoplasm. The enzyme catalyses L-seryl-tRNA(Sec) + selenophosphate + H(+) = L-selenocysteinyl-tRNA(Sec) + phosphate. It participates in aminoacyl-tRNA biosynthesis; selenocysteinyl-tRNA(Sec) biosynthesis; selenocysteinyl-tRNA(Sec) from L-seryl-tRNA(Sec) (bacterial route): step 1/1. Converts seryl-tRNA(Sec) to selenocysteinyl-tRNA(Sec) required for selenoprotein biosynthesis. The protein is L-seryl-tRNA(Sec) selenium transferase of Geotalea uraniireducens (strain Rf4) (Geobacter uraniireducens).